Reading from the N-terminus, the 621-residue chain is Auxin response factor 13 (621 aa).

The TF-B3 DNA-binding region spans 124-228; sequence FSKILTASDV…ELRFGIRRAK (105 aa). A PB1 domain is found at 508 to 600; it reads RSRIKVHMQG…EIKKMKLKNK (93 aa).

The protein belongs to the ARF family. In terms of assembly, homodimers and heterodimers.

Its subcellular location is the nucleus. Auxin response factors (ARFs) are transcriptional factors that bind specifically to the DNA sequence 5'-TGTCTC-3' found in the auxin-responsive promoter elements (AuxREs). Could act as transcriptional activator or repressor. Formation of heterodimers with Aux/IAA proteins may alter their ability to modulate early auxin response genes expression. The protein is Auxin response factor 13 (ARF13) of Arabidopsis thaliana (Mouse-ear cress).